A 369-amino-acid chain; its full sequence is Serine/threonine-protein phosphatase PP2A-1 catalytic subunit (369 aa).

A disordered region spans residues 1 to 57 (MDTDLDVPMQDAVTEQLTPTVSEDMDLNNNSSDNNAEEFSVDDLKPGSSGIADHKSS). Mn(2+) contacts are provided by D117, H119, D145, and N177. H178 (proton donor) is an active-site residue. H227 and H301 together coordinate Mn(2+). The interval 348-369 (QYDPSVRPGEPSVSRKTPDYFL) is disordered. L369 is subject to Leucine methyl ester.

This sequence belongs to the PPP phosphatase family. PP-2A subfamily. Inactivated in a complex with phosphatase methylesterase PPE1 (PP2Ai). Interacts with phosphatase 2A activator RRD2, which can reactivate PP2Ai by dissociating the catalytic subunit from the complex. Forms a ternary complex with RRD2-TAP42. It depends on Mn(2+) as a cofactor. Post-translationally, reversibly methyl esterified on Leu-369 by leucine carboxyl methyltransferase 1 (PPM1) and protein phosphatase methylesterase 1 (PPE1). Carboxyl methylation influences the affinity of the catalytic subunit for the different regulatory subunits, thereby modulating the PP2A holoenzyme's substrate specificity, enzyme activity and cellular localization.

It catalyses the reaction O-phospho-L-seryl-[protein] + H2O = L-seryl-[protein] + phosphate. It carries out the reaction O-phospho-L-threonyl-[protein] + H2O = L-threonyl-[protein] + phosphate. Functionally, exact function not known, phosphatase 2A performs an essential cellular function. This is Serine/threonine-protein phosphatase PP2A-1 catalytic subunit (PPH21) from Saccharomyces cerevisiae (strain ATCC 204508 / S288c) (Baker's yeast).